A 384-amino-acid chain; its full sequence is Flap endonuclease 1 (384 aa).

Positions 1–105 (MGIKKLTDLI…GELAKRQARR (105 aa)) are N-domain. Aspartate 34 contacts Mg(2+). Arginine 71 serves as a coordination point for DNA. Positions 87, 159, 161, 180, and 182 each coordinate Mg(2+). Residues 123–254 (EVQKFAKRVI…KRAIELIQKH (132 aa)) form an I-domain region. DNA is bound at residue glutamate 159. 2 residues coordinate DNA: glycine 232 and aspartate 234. Aspartate 234 contacts Mg(2+). The segment at 338–346 (VQSRMDSFI) is interaction with PCNA. A disordered region spans residues 349 to 384 (IKKPEDPNDKKKKVTKTPSKPSAKTSKKSSSTFKRK). Over residues 364-384 (KTPSKPSAKTSKKSSSTFKRK) the composition is skewed to low complexity.

This sequence belongs to the XPG/RAD2 endonuclease family. FEN1 subfamily. Interacts with PCNA. Three molecules of repg bind to one PCNA trimer with each molecule binding to one PCNA monomer. PCNA stimulates the nuclease activity without altering cleavage specificity. Mg(2+) is required as a cofactor. In terms of processing, phosphorylated. Phosphorylation upon DNA damage induces relocalization to the nuclear plasma.

The protein resides in the nucleus. The protein localises to the nucleolus. It is found in the nucleoplasm. It localises to the mitochondrion. Its function is as follows. Structure-specific nuclease with 5'-flap endonuclease and 5'-3' exonuclease activities involved in DNA replication and repair. During DNA replication, cleaves the 5'-overhanging flap structure that is generated by displacement synthesis when DNA polymerase encounters the 5'-end of a downstream Okazaki fragment. It enters the flap from the 5'-end and then tracks to cleave the flap base, leaving a nick for ligation. Also involved in the long patch base excision repair (LP-BER) pathway, by cleaving within the apurinic/apyrimidinic (AP) site-terminated flap. Acts as a genome stabilization factor that prevents flaps from equilibrating into structures that lead to duplications and deletions. Also possesses 5'-3' exonuclease activity on nicked or gapped double-stranded DNA, and exhibits RNase H activity. Also involved in replication and repair of rDNA and in repairing mitochondrial DNA. The sequence is that of Flap endonuclease 1 from Dictyostelium discoideum (Social amoeba).